The chain runs to 451 residues: MVQTPSEINTHLKHLLACDAYKLSHRLMYPNDTTNLYSCLTARGGRGGFPNFVWNHEFAKKIILEVFGNFCDSVLAVQNDPGLAQALTDKVTTVFGDPQFGLEFTQHICYLANFLKQHHQLPLTVKIHQSSEGLAFRTPLVTITGSDQMVPELVWLVNYFETVLLENIWLYQTTLTVAQSLKLLLERYANETADNTEFTHFQCHDFSMRGMSSLQSALYVANAHLQYFSGSDTILGGVAAKSILASEHSVMCADGQEGELNTFKRLLEQFPNKNLSLVIDSYDMWHVLDNILPQLKDLVLQRQEKLYLRPDSGNFETLICQGKRFNPEDKTTWGVIDYLDYHFGSTVNQKGYKVLNQKLGIVYGDGITYERIEYILEQLKQRGFCSSNIVFGVGSTTYQNLNRDTLGFVYKLTAIKKGNTWHDVTKSPITDPTKQSIGGRFDNPNLIQVYG.

Diphosphate is bound at residue Arg-209. Asp-232 is a binding site for beta-nicotinamide D-ribonucleotide. The diphosphate site is built by His-248 and Arg-309. Beta-nicotinamide D-ribonucleotide-binding positions include 309 to 311, 364 to 365, and Arg-403; these read RPD and GD.

The protein belongs to the NAPRTase family.

It catalyses the reaction beta-nicotinamide D-ribonucleotide + diphosphate = 5-phospho-alpha-D-ribose 1-diphosphate + nicotinamide + H(+). The protein operates within cofactor biosynthesis; NAD(+) biosynthesis; nicotinamide D-ribonucleotide from 5-phospho-alpha-D-ribose 1-diphosphate and nicotinamide: step 1/1. In terms of biological role, catalyzes the condensation of nicotinamide with 5-phosphoribosyl-1-pyrophosphate to yield nicotinamide mononucleotide, an intermediate in the biosynthesis of NAD. This chain is Nicotinamide phosphoribosyltransferase, found in Mycoplasma pneumoniae (strain ATCC 29342 / M129 / Subtype 1) (Mycoplasmoides pneumoniae).